The chain runs to 238 residues: ATP-dependent dethiobiotin synthetase BioD (238 aa).

13–18 (DIGKTF) is a binding site for ATP. Thr17 contacts Mg(2+). Lys38 is an active-site residue. Residue Ser42 coordinates substrate. Residues Asp55, 116–119 (EGSG), 209–211 (PRI), and Asn216 each bind ATP. Mg(2+) contacts are provided by Asp55 and Glu116.

This sequence belongs to the dethiobiotin synthetase family. Homodimer. The cofactor is Mg(2+).

Its subcellular location is the cytoplasm. The catalysed reaction is (7R,8S)-7,8-diammoniononanoate + CO2 + ATP = (4R,5S)-dethiobiotin + ADP + phosphate + 3 H(+). The protein operates within cofactor biosynthesis; biotin biosynthesis; biotin from 7,8-diaminononanoate: step 1/2. Its function is as follows. Catalyzes a mechanistically unusual reaction, the ATP-dependent insertion of CO2 between the N7 and N8 nitrogen atoms of 7,8-diaminopelargonic acid (DAPA, also called 7,8-diammoniononanoate) to form a ureido ring. The sequence is that of ATP-dependent dethiobiotin synthetase BioD from Clostridium novyi (strain NT).